Consider the following 160-residue polypeptide: Glyoxalase domain-containing protein 5 (160 aa).

The VOC domain occupies 33-153 (RLDHLVLTVR…DHNLIEVSNY (121 aa)).

Belongs to the glyoxalase I family.

In Xenopus laevis (African clawed frog), this protein is Glyoxalase domain-containing protein 5 (glod5).